Consider the following 72-residue polypeptide: Large ribosomal subunit protein bL31c (72 aa).

Belongs to the bacterial ribosomal protein bL31 family. Type A subfamily. In terms of assembly, part of the 50S ribosomal subunit.

The protein localises to the plastid. It is found in the chloroplast. Functionally, binds the 23S rRNA. This is Large ribosomal subunit protein bL31c (rpl31) from Phaeodactylum tricornutum (strain CCAP 1055/1).